The chain runs to 381 residues: Cytochrome b (381 aa).

The next 4 helical transmembrane spans lie at 38–58 (FGSL…FLAM), 82–103 (WLLR…YFHI), 118–138 (WMTG…GYVL), and 183–203 (FFTF…IHLL). Positions 88 and 102 each coordinate heme b. Heme b-binding residues include H187 and H201. A ubiquinone is bound at residue H206. 4 helical membrane passes run 231–251 (IKDT…SLTS), 293–313 (LGGV…PFTF), 325–345 (VAQP…WIGA), and 352–372 (YNFL…FTPI).

Belongs to the cytochrome b family. The main subunits of complex b-c1 are: cytochrome b, cytochrome c1 and the Rieske protein. It depends on heme b as a cofactor.

It is found in the mitochondrion inner membrane. Its function is as follows. Component of the ubiquinol-cytochrome c reductase complex (complex III or cytochrome b-c1 complex) that is part of the mitochondrial respiratory chain. The b-c1 complex mediates electron transfer from ubiquinol to cytochrome c. Contributes to the generation of a proton gradient across the mitochondrial membrane that is then used for ATP synthesis. The protein is Cytochrome b (MT-CYB) of Artemia franciscana (Brine shrimp).